The primary structure comprises 556 residues: MFVFRVLNTVPYTNRTGAKDLVASIHSFLTSNLLVGLAVLISWKQFGGTPIECMVPLDFTSAWVQYSNNYCWAQPTYFIPFTEELVEQVVDPADVVADGITIGNGGNRPRFVKKGGEKISYYQWMSFFLLFEAACFRLPCFIWKYFASQSGMQVGEILRVASDENNAVPLVKKANIDALCIHLRGVLRFQKRLKLKKIVPHKILRFLNIKYSAYYVTFIYFVAKVAFLLNVILQSKLLNKYMLPHDRQQNFGFDMWKTIFYGSTNGNETWRENGVFPRVTLCDFETRDMGNVQMHTVQCVLLLNLFTEKIFVFLWAWYILLTAFTVGNLFSWLFAVFNETYNEHFILNHLEMCETPFDKDDLKNREHVTRFITLYLGTDGLFLLQLIAQHADVVFTTELIAALFKTYIEIEAQRATLKQMNAVLPLLRPNDESQVESGKNTAPSTSHNVRRRGTEQLEKNVKSRQGSLSTQLRPFNSFEEPDQPTKKFDDSSSEDENSKKGSKKPSPTKKKASSKNSPQSSSNSRRPSLAHTASPAFTHHHEPDSKIPKTAEKKHW.

Transmembrane regions (helical) follow at residues 21 to 41, 127 to 147, and 213 to 233; these read LVASIHSFLTSNLLVGLAVLI, FFLLFEAACFRLPCFIWKYFA, and AYYVTFIYFVAKVAFLLNVIL. An N-linked (GlcNAc...) asparagine glycan is attached at Asn267. The chain crosses the membrane as a helical span at residues 310-330; it reads IFVFLWAWYILLTAFTVGNLF. Positions 431–556 are disordered; the sequence is DESQVESGKN…IPKTAEKKHW (126 aa). Positions 435–447 are enriched in polar residues; it reads VESGKNTAPSTSH. Positions 452 to 461 are enriched in basic and acidic residues; sequence RGTEQLEKNV. Residues 463-474 show a composition bias toward polar residues; that stretch reads SRQGSLSTQLRP. Over residues 500–513 the composition is skewed to basic residues; sequence KGSKKPSPTKKKAS. The segment covering 514-527 has biased composition (low complexity); the sequence is SKNSPQSSSNSRRP. Residues 539 to 556 are compositionally biased toward basic and acidic residues; that stretch reads HHHEPDSKIPKTAEKKHW.

It belongs to the pannexin family.

It is found in the cell membrane. Its subcellular location is the cell junction. The protein localises to the gap junction. In terms of biological role, structural component of the gap junctions. The polypeptide is Innexin-7 (inx-7) (Caenorhabditis elegans).